A 363-amino-acid polypeptide reads, in one-letter code: Chorismate synthase (363 aa).

Arg-48 is a binding site for NADP(+). Residues 125-127 (RSS), 238-239 (NA), Gly-278, 293-297 (KPTAS), and Arg-319 each bind FMN.

The protein belongs to the chorismate synthase family. Homotetramer. Requires FMNH2 as cofactor.

The enzyme catalyses 5-O-(1-carboxyvinyl)-3-phosphoshikimate = chorismate + phosphate. It functions in the pathway metabolic intermediate biosynthesis; chorismate biosynthesis; chorismate from D-erythrose 4-phosphate and phosphoenolpyruvate: step 7/7. Its function is as follows. Catalyzes the anti-1,4-elimination of the C-3 phosphate and the C-6 proR hydrogen from 5-enolpyruvylshikimate-3-phosphate (EPSP) to yield chorismate, which is the branch point compound that serves as the starting substrate for the three terminal pathways of aromatic amino acid biosynthesis. This reaction introduces a second double bond into the aromatic ring system. The protein is Chorismate synthase of Acinetobacter baumannii (strain AB0057).